We begin with the raw amino-acid sequence, 465 residues long: Hydroxyacid-oxoacid transhydrogenase, mitochondrial (465 aa).

Residue Lys443 is modified to N6-acetyllysine. Residue Ser450 is modified to Phosphoserine.

This sequence belongs to the iron-containing alcohol dehydrogenase family. Hydroxyacid-oxoacid transhydrogenase subfamily. In terms of tissue distribution, expressed in white and brown adipose tissues, liver, and kidney. Expression is differentiation-dependent during in vitro brown and white adipogenesis.

It is found in the mitochondrion. It catalyses the reaction (S)-3-hydroxybutanoate + 2-oxoglutarate = (R)-2-hydroxyglutarate + acetoacetate. It carries out the reaction 4-hydroxybutanoate + 2-oxoglutarate = (R)-2-hydroxyglutarate + succinate semialdehyde. Catalyzes the cofactor-independent reversible oxidation of gamma-hydroxybutyrate (GHB) to succinic semialdehyde (SSA) coupled to reduction of 2-ketoglutarate (2-KG) to D-2-hydroxyglutarate (D-2-HG). L-3-hydroxybutyrate (L-3-OHB) is also a substrate for HOT when using 2-KG as hydrogen acceptor, resulting in the formation of D-2-HG. The chain is Hydroxyacid-oxoacid transhydrogenase, mitochondrial (Adhfe1) from Mus musculus (Mouse).